The sequence spans 422 residues: Putative acid phosphatase 5 (422 aa).

A signal peptide spans 1-13 (MLLLLVLLIGASG). Histidine 40 serves as the catalytic Nucleophile. N-linked (GlcNAc...) asparagine glycosylation is found at asparagine 104, asparagine 210, and asparagine 218. 3 cysteine pairs are disulfide-bonded: cysteine 152/cysteine 363, cysteine 205/cysteine 302, and cysteine 338/cysteine 342. Aspartate 279 serves as the catalytic Proton donor. Asparagine 312 and asparagine 323 each carry an N-linked (GlcNAc...) asparagine glycan.

It belongs to the histidine acid phosphatase family.

It carries out the reaction a phosphate monoester + H2O = an alcohol + phosphate. This is Putative acid phosphatase 5 (pho-5) from Caenorhabditis elegans.